Here is a 302-residue protein sequence, read N- to C-terminus: MTEETDLEDLRRGTDLVKRGFAKMQKGGVIMDVVNREQARIAEDAGAVAVMHLESVPADIRKRGGVARMADPSKLEEIIEEVSIPVMGKARIGHTAEAQILEAAGADMVDESEVLTQADDRYHIDKREFTAPFVCGARNLAEALRRIDEGAAMIRTKGEAGTGDVNQAVTHQRNIQRSIGKLEGMAYEERDEWAREHGAPRRLVHETADRGRLPVVNFAAGGIATPADAALMMQHGCDGIFVGSGIFGAENPQAMGESVVAAVNNYDDPEQLKEIAKNPGKGMKGQANADLDEEEQLQGRGV.

D-ribose 5-phosphate is bound at residue Asp32. Lys89 (schiff-base intermediate with D-ribose 5-phosphate) is an active-site residue. Gly161 is a binding site for D-ribose 5-phosphate. Residue Arg173 participates in D-glyceraldehyde 3-phosphate binding. Residues Gly222 and 243-244 contribute to the D-ribose 5-phosphate site; that span reads GS. The interval 275-302 is disordered; the sequence is IAKNPGKGMKGQANADLDEEEQLQGRGV.

This sequence belongs to the PdxS/SNZ family. In the presence of PdxT, forms a dodecamer of heterodimers.

The catalysed reaction is aldehydo-D-ribose 5-phosphate + D-glyceraldehyde 3-phosphate + L-glutamine = pyridoxal 5'-phosphate + L-glutamate + phosphate + 3 H2O + H(+). It functions in the pathway cofactor biosynthesis; pyridoxal 5'-phosphate biosynthesis. Functionally, catalyzes the formation of pyridoxal 5'-phosphate from ribose 5-phosphate (RBP), glyceraldehyde 3-phosphate (G3P) and ammonia. The ammonia is provided by the PdxT subunit. Can also use ribulose 5-phosphate and dihydroxyacetone phosphate as substrates, resulting from enzyme-catalyzed isomerization of RBP and G3P, respectively. This chain is Pyridoxal 5'-phosphate synthase subunit PdxS, found in Haloarcula marismortui (strain ATCC 43049 / DSM 3752 / JCM 8966 / VKM B-1809) (Halobacterium marismortui).